The following is a 463-amino-acid chain: Chaperone SurA (463 aa).

Positions 1 to 25 (MTKPFSVVLASLLAITSTISPLASA) are cleaved as a signal peptide. PpiC domains follow at residues 174–276 (GSKY…KLME) and 289–388 (VTEY…QRVG). 2 disordered regions span residues 329-348 (ATAK…GDLG) and 434-463 (GDRA…KPTR). The span at 439–452 (NNATAAPAKSADPA) shows a compositional bias: low complexity. Residues 453 to 463 (LPAPPPAKPTR) are compositionally biased toward pro residues.

Its subcellular location is the periplasm. It catalyses the reaction [protein]-peptidylproline (omega=180) = [protein]-peptidylproline (omega=0). Chaperone involved in the correct folding and assembly of outer membrane proteins. Recognizes specific patterns of aromatic residues and the orientation of their side chains, which are found more frequently in integral outer membrane proteins. May act in both early periplasmic and late outer membrane-associated steps of protein maturation. The sequence is that of Chaperone SurA from Xanthomonas oryzae pv. oryzae (strain KACC10331 / KXO85).